The sequence spans 216 residues: Ribosome maturation factor RimP (216 aa).

The protein belongs to the RimP family.

Its subcellular location is the cytoplasm. Its function is as follows. Required for maturation of 30S ribosomal subunits. This chain is Ribosome maturation factor RimP, found in Bartonella henselae (strain ATCC 49882 / DSM 28221 / CCUG 30454 / Houston 1) (Rochalimaea henselae).